We begin with the raw amino-acid sequence, 264 residues long: SPRY domain-containing SOCS box protein 2 (264 aa).

Over residues 1-18 (MGQTALARGSSSTPSSHA) the composition is skewed to polar residues. A disordered region spans residues 1–53 (MGQTALARGSSSTPSSHALYSDLSPPEGLEELLSAPPPDLGAQRHHGWNPKDC). Residues 21-34 (SDLSPPEGLEELLS) are compositionally biased toward low complexity. The B30.2/SPRY domain maps to 26–221 (PEGLEELLSA…VRIRYLGERR (196 aa)). Positions 222–264 (AEEPQSLLHLSRLCVRHALGDTRLGQISSLPLPPAMKRYLLYK) constitute an SOCS box domain.

It belongs to the SPSB family. As to quaternary structure, component of the probable ECS(SPSB2) E3 ubiquitin-protein ligase complex which contains CUL5, RNF7/RBX2, Elongin BC complex and SPSB2. Interacts with CUL5, RNF7, ELOB and ELOC. Interacts with MET. Interacts (via B30.2/SPRY domain) with PAWR; this interaction occurs in association with the Elongin BC complex. Interacts with NOS2.

Its subcellular location is the cytoplasm. It localises to the cytosol. It participates in protein modification; protein ubiquitination. Functionally, substrate recognition component of a SCF-like ECS (Elongin BC-CUL2/5-SOCS-box protein) E3 ubiquitin-protein ligase complex which mediates the ubiquitination and subsequent proteasomal degradation of target proteins. Negatively regulates nitric oxide (NO) production and limits cellular toxicity in activated macrophages by mediating the ubiquitination and proteasomal degradation of NOS2. Acts as a bridge which links NOS2 with the ECS E3 ubiquitin ligase complex components ELOC and CUL5. In Rattus norvegicus (Rat), this protein is SPRY domain-containing SOCS box protein 2 (Spsb2).